Reading from the N-terminus, the 209-residue chain is Probable nicotinate-nucleotide adenylyltransferase (209 aa).

This sequence belongs to the NadD family.

It catalyses the reaction nicotinate beta-D-ribonucleotide + ATP + H(+) = deamido-NAD(+) + diphosphate. It functions in the pathway cofactor biosynthesis; NAD(+) biosynthesis; deamido-NAD(+) from nicotinate D-ribonucleotide: step 1/1. Catalyzes the reversible adenylation of nicotinate mononucleotide (NaMN) to nicotinic acid adenine dinucleotide (NaAD). This Streptococcus pneumoniae serotype 4 (strain ATCC BAA-334 / TIGR4) protein is Probable nicotinate-nucleotide adenylyltransferase.